A 100-amino-acid polypeptide reads, in one-letter code: Urease subunit gamma (100 aa).

This sequence belongs to the urease gamma subunit family. Heterotrimer of UreA (gamma), UreB (beta) and UreC (alpha) subunits. Three heterotrimers associate to form the active enzyme.

It is found in the cytoplasm. It carries out the reaction urea + 2 H2O + H(+) = hydrogencarbonate + 2 NH4(+). It participates in nitrogen metabolism; urea degradation; CO(2) and NH(3) from urea (urease route): step 1/1. The chain is Urease subunit gamma from Cupriavidus taiwanensis (strain DSM 17343 / BCRC 17206 / CCUG 44338 / CIP 107171 / LMG 19424 / R1) (Ralstonia taiwanensis (strain LMG 19424)).